We begin with the raw amino-acid sequence, 261 residues long: Thiamine thiazole synthase (261 aa).

NAD(+)-binding positions include Ser-40, 59–60, Gly-67, Val-133, and 159–161; these read ER and HID. The Fe cation site is built by Asp-161 and His-176. 2 residues coordinate NAD(+): Ser-179 and Met-226. Residue Arg-236 participates in glycine binding.

The protein belongs to the THI4 family. Homooctamer; tetramer of dimers. It depends on Fe(2+) as a cofactor.

It carries out the reaction hydrogen sulfide + glycine + NAD(+) = ADP-5-ethyl-4-methylthiazole-2-carboxylate + nicotinamide + 3 H2O + H(+). It participates in cofactor biosynthesis; thiamine diphosphate biosynthesis. Its function is as follows. Involved in the biosynthesis of the thiazole moiety of thiamine. Catalyzes the conversion of NAD and glycine to adenosine diphosphate 5-(2-hydroxyethyl)-4-methylthiazole-2-carboxylate (ADT), an adenylated thiazole intermediate, using free sulfide as a source of sulfur. The protein is Thiamine thiazole synthase of Methanococcus maripaludis (strain C6 / ATCC BAA-1332).